Here is a 224-residue protein sequence, read N- to C-terminus: 7-cyano-7-deazaguanine synthase (224 aa).

9–19 contacts ATP; the sequence is LSGGLDSATAL. Zn(2+) contacts are provided by cysteine 188, cysteine 198, cysteine 201, and cysteine 204.

It belongs to the QueC family. It depends on Zn(2+) as a cofactor.

It carries out the reaction 7-carboxy-7-deazaguanine + NH4(+) + ATP = 7-cyano-7-deazaguanine + ADP + phosphate + H2O + H(+). The protein operates within purine metabolism; 7-cyano-7-deazaguanine biosynthesis. Catalyzes the ATP-dependent conversion of 7-carboxy-7-deazaguanine (CDG) to 7-cyano-7-deazaguanine (preQ(0)). The chain is 7-cyano-7-deazaguanine synthase from Thiobacillus denitrificans (strain ATCC 25259 / T1).